The following is a 209-amino-acid chain: V-type ATP synthase subunit D (209 aa).

Belongs to the V-ATPase D subunit family.

Produces ATP from ADP in the presence of a proton gradient across the membrane. The chain is V-type ATP synthase subunit D from Anaeromyxobacter sp. (strain K).